The chain runs to 334 residues: Probable N5-carboxyaminoimidazole ribonucleotide mutase (334 aa).

The substrate site is built by Ser11, Asp14, and Arg41.

It belongs to the AIR carboxylase family. Class I subfamily.

The catalysed reaction is 5-carboxyamino-1-(5-phospho-D-ribosyl)imidazole + H(+) = 5-amino-1-(5-phospho-D-ribosyl)imidazole-4-carboxylate. Its pathway is purine metabolism; IMP biosynthesis via de novo pathway; 5-amino-1-(5-phospho-D-ribosyl)imidazole-4-carboxylate from 5-amino-1-(5-phospho-D-ribosyl)imidazole (N5-CAIR route): step 2/2. Catalyzes the conversion of N5-carboxyaminoimidazole ribonucleotide (N5-CAIR) to 4-carboxy-5-aminoimidazole ribonucleotide (CAIR). This Methanothermobacter thermautotrophicus (strain ATCC 29096 / DSM 1053 / JCM 10044 / NBRC 100330 / Delta H) (Methanobacterium thermoautotrophicum) protein is Probable N5-carboxyaminoimidazole ribonucleotide mutase.